The following is a 343-amino-acid chain: GTPase Obg (343 aa).

One can recognise an Obg domain in the interval 2-160; that stretch reads EKFVDRVKIF…RWIILELKLI (159 aa). Positions 161–332 constitute an OBG-type G domain; sequence ADVGLVGFPN…LKEGLWKKYE (172 aa). Residues 167–174, 192–196, 214–217, 284–287, and 313–315 contribute to the GTP site; these read GFPNAGKS, FTTLS, DIPG, NKID, and SAL. Mg(2+)-binding residues include Ser174 and Thr194.

It belongs to the TRAFAC class OBG-HflX-like GTPase superfamily. OBG GTPase family. As to quaternary structure, monomer. The cofactor is Mg(2+).

The protein localises to the cytoplasm. An essential GTPase which binds GTP, GDP and possibly (p)ppGpp with moderate affinity, with high nucleotide exchange rates and a fairly low GTP hydrolysis rate. Plays a role in control of the cell cycle, stress response, ribosome biogenesis and in those bacteria that undergo differentiation, in morphogenesis control. The polypeptide is GTPase Obg (Aquifex aeolicus (strain VF5)).